The chain runs to 170 residues: Phosphopantetheine adenylyltransferase (170 aa).

Thr18 is a substrate binding site. Residues 18–19 (TF) and His26 each bind ATP. Positions 50, 84, and 98 each coordinate substrate. Residues 99 to 101 (GLR), Glu109, and 134 to 140 (WIYISSS) each bind ATP.

It belongs to the bacterial CoaD family. In terms of assembly, homohexamer. Mg(2+) serves as cofactor.

It localises to the cytoplasm. It catalyses the reaction (R)-4'-phosphopantetheine + ATP + H(+) = 3'-dephospho-CoA + diphosphate. The protein operates within cofactor biosynthesis; coenzyme A biosynthesis; CoA from (R)-pantothenate: step 4/5. Functionally, reversibly transfers an adenylyl group from ATP to 4'-phosphopantetheine, yielding dephospho-CoA (dPCoA) and pyrophosphate. The protein is Phosphopantetheine adenylyltransferase of Desulfotalea psychrophila (strain LSv54 / DSM 12343).